The chain runs to 361 residues: Putative agmatine deiminase (361 aa).

The active-site Amidino-cysteine intermediate is Cys354.

Belongs to the agmatine deiminase family.

The catalysed reaction is agmatine + H2O = N-carbamoylputrescine + NH4(+). This chain is Putative agmatine deiminase, found in Streptococcus pneumoniae (strain ATCC BAA-255 / R6).